The chain runs to 118 residues: Ribonuclease P protein component (118 aa).

This sequence belongs to the RnpA family. Consists of a catalytic RNA component (M1 or rnpB) and a protein subunit.

It carries out the reaction Endonucleolytic cleavage of RNA, removing 5'-extranucleotides from tRNA precursor.. Functionally, RNaseP catalyzes the removal of the 5'-leader sequence from pre-tRNA to produce the mature 5'-terminus. It can also cleave other RNA substrates such as 4.5S RNA. The protein component plays an auxiliary but essential role in vivo by binding to the 5'-leader sequence and broadening the substrate specificity of the ribozyme. In Rickettsia conorii (strain ATCC VR-613 / Malish 7), this protein is Ribonuclease P protein component.